The primary structure comprises 297 residues: Coatomer subunit epsilon-2 (297 aa).

This sequence belongs to the COPE family. Oligomeric complex that consists of at least the alpha, beta, beta', gamma, delta, epsilon and zeta subunits.

It is found in the cytoplasm. The protein resides in the golgi apparatus membrane. It localises to the cytoplasmic vesicle. The protein localises to the COPI-coated vesicle membrane. The coatomer is a cytosolic protein complex that binds to dilysine motifs and reversibly associates with Golgi non-clathrin-coated vesicles, which further mediate biosynthetic protein transport from the ER, via the Golgi up to the trans Golgi network. The coatomer complex is required for budding from Golgi membranes, and is essential for the retrograde Golgi-to-ER transport of dilysine-tagged proteins. In Oryza sativa subsp. japonica (Rice), this protein is Coatomer subunit epsilon-2.